The sequence spans 335 residues: Trans-1,2-dihydrobenzene-1,2-diol dehydrogenase (335 aa).

Belongs to the Gfo/Idh/MocA family. Homodimer.

It catalyses the reaction (1R,2R)-1,2-dihydrobenzene-1,2-diol + NADP(+) = catechol + NADPH + H(+). The catalysed reaction is D-xylose + NADP(+) = D-xylono-1,5-lactone + NADPH + H(+). The chain is Trans-1,2-dihydrobenzene-1,2-diol dehydrogenase (DHDH) from Bos taurus (Bovine).